The following is a 530-amino-acid chain: uncharacterized protein (530 aa).

Basic and acidic residues-rich tracts occupy residues 1-11 (MTALNDTERAV) and 28-38 (PRSEETASERP). The segment at 1-38 (MTALNDTERAVRNWTAGRPHRPAPMRPPRSEETASERP) is disordered. The Cytoplasmic portion of the chain corresponds to 1–50 (MTALNDTERAVRNWTAGRPHRPAPMRPPRSEETASERPSRYYPTWLPSRS). The helical transmembrane segment at 51–71 (FIAAVIAIGGMQLLATMDSTV) threads the bilayer. Over 72 to 91 (AIVALPKIQNELSLSDAGRS) the chain is Extracellular. A helical transmembrane segment spans residues 92–112 (WVITAYVLTFGGLMLLGGRLG). The Cytoplasmic segment spans residues 113-119 (DTIGRKR). Residues 120-140 (TFIVGVALFTISSVLCAVAWD) traverse the membrane as a helical segment. Residues 141–150 (EATLVIARLS) are Extracellular-facing. Residues 151-171 (QGVGSAIASPTGLALVATTFP) traverse the membrane as a helical segment. At 172 to 180 (KGPARNAAT) the chain is on the cytoplasmic side. The chain crosses the membrane as a helical span at residues 181–201 (AVFAAMTAIGSVMGLVVGGAL). Over 202 to 203 (TE) the chain is Extracellular. Residues 204–224 (VSWRWAFLVNVPIGLVMIYLA) traverse the membrane as a helical segment. Topologically, residues 225-239 (RTALRETNKERMKLD) are cytoplasmic. Residues 240–260 (ATGAILATLACTAAVFAFSIG) form a helical membrane-spanning segment. At 261 to 266 (PEKGWM) the chain is on the extracellular side. The helical transmembrane segment at 267–287 (SGITIGSGLVALAAAVAFVIV) threads the bilayer. Residues 288 to 306 (ERTAENPVVPFHLFRDRNR) lie on the Cytoplasmic side of the membrane. A helical membrane pass occupies residues 307-327 (LVTFSAILLAGGVMFSLTVCI). Topologically, residues 328–343 (GLYVQDILGYSALRAG) are extracellular. The helical transmembrane segment at 344–364 (VGFIPFVIAMGIGLGVSSQLV) threads the bilayer. The Cytoplasmic portion of the chain corresponds to 365–370 (SRFSPR). A helical membrane pass occupies residues 371-391 (VLTIGGGYLLFGAMLYGSFFM). Over 392 to 400 (HRGVPYFPN) the chain is Extracellular. Residues 401-421 (LVMPIVVGGIGIGMAVVPLTL) traverse the membrane as a helical segment. At 422 to 437 (SAIAGVGFDQIGPVSA) the chain is on the cytoplasmic side. The chain crosses the membrane as a helical span at residues 438–458 (IALMLQSLGGPLVLAVIQAVI). Over 459–488 (TSRTLYLGGTTGPVKFMNDVQLAALDHAYT) the chain is Extracellular. The helical transmembrane segment at 489 to 509 (YGLLWVAGAAIIVGGMALFIG) threads the bilayer. At 510-530 (YTPQQVAHAQEVKEAIDAGEL) the chain is on the cytoplasmic side.

Belongs to the major facilitator superfamily.

The protein resides in the cell membrane. This is an uncharacterized protein from Mycobacterium tuberculosis (strain CDC 1551 / Oshkosh).